The primary structure comprises 155 residues: Probable calcium-binding protein CML44 (155 aa).

3 consecutive EF-hand domains span residues 6–41 (ITTNDLRRMFKTLDKNQDGLVTLDELLWILDKLGWA), 85–120 (DNDEAIARAFNVFDVNGDGYISAEELRDVLERLGFE), and 130–155 (RMIRVHDKNLDGFVDFEEFKNMILHV). Asp19, Asn21, Asp23, Glu30, Asp98, Asn100, Asp102, Tyr104, and Glu109 together coordinate Ca(2+).

In terms of biological role, potential calcium sensor. The polypeptide is Probable calcium-binding protein CML44 (CML44) (Arabidopsis thaliana (Mouse-ear cress)).